The sequence spans 190 residues: Putative glutathione-dependent formaldehyde-activating enzyme (190 aa).

In terms of domain architecture, CENP-V/GFA spans 19–165 (FKGGKLYCHC…FRKEGLQTYD (147 aa)). Zn(2+)-binding residues include cysteine 26, cysteine 28, cysteine 47, cysteine 49, cysteine 52, cysteine 94, and cysteine 97.

Belongs to the Gfa family. The cofactor is Zn(2+).

It catalyses the reaction S-(hydroxymethyl)glutathione = glutathione + formaldehyde. It functions in the pathway one-carbon metabolism; formaldehyde degradation; formate from formaldehyde (glutathione route): step 1/3. Functionally, catalyzes the condensation of formaldehyde and glutathione to S-hydroxymethylglutathione. The protein is Putative glutathione-dependent formaldehyde-activating enzyme of Phaeosphaeria nodorum (strain SN15 / ATCC MYA-4574 / FGSC 10173) (Glume blotch fungus).